The chain runs to 176 residues: Large ribosomal subunit protein uL6 (176 aa).

The protein belongs to the universal ribosomal protein uL6 family. In terms of assembly, part of the 50S ribosomal subunit.

Functionally, this protein binds to the 23S rRNA, and is important in its secondary structure. It is located near the subunit interface in the base of the L7/L12 stalk, and near the tRNA binding site of the peptidyltransferase center. The protein is Large ribosomal subunit protein uL6 of Lactobacillus helveticus (strain DPC 4571).